A 157-amino-acid polypeptide reads, in one-letter code: ATP synthase subunit delta (157 aa).

Belongs to the ATPase delta chain family. In terms of assembly, F-type ATPases have 2 components, F(1) - the catalytic core - and F(0) - the membrane proton channel. F(1) has five subunits: alpha(3), beta(3), gamma(1), delta(1), epsilon(1). F(0) has three main subunits: a(1), b(2) and c(10-14). The alpha and beta chains form an alternating ring which encloses part of the gamma chain. F(1) is attached to F(0) by a central stalk formed by the gamma and epsilon chains, while a peripheral stalk is formed by the delta and b chains.

It localises to the cell membrane. In terms of biological role, f(1)F(0) ATP synthase produces ATP from ADP in the presence of a proton or sodium gradient. F-type ATPases consist of two structural domains, F(1) containing the extramembraneous catalytic core and F(0) containing the membrane proton channel, linked together by a central stalk and a peripheral stalk. During catalysis, ATP synthesis in the catalytic domain of F(1) is coupled via a rotary mechanism of the central stalk subunits to proton translocation. Functionally, this protein is part of the stalk that links CF(0) to CF(1). It either transmits conformational changes from CF(0) to CF(1) or is implicated in proton conduction. The chain is ATP synthase subunit delta from Chloroflexus aurantiacus (strain ATCC 29364 / DSM 637 / Y-400-fl).